The sequence spans 212 residues: Large ribosomal subunit protein uL3 (212 aa).

The segment at 136–155 is disordered; that stretch reads THGNSLSHRSNGSIGQNQTP. Q153 is subject to N5-methylglutamine.

It belongs to the universal ribosomal protein uL3 family. Part of the 50S ribosomal subunit. Forms a cluster with proteins L14 and L19. Methylated by PrmB.

Its function is as follows. One of the primary rRNA binding proteins, it binds directly near the 3'-end of the 23S rRNA, where it nucleates assembly of the 50S subunit. The sequence is that of Large ribosomal subunit protein uL3 from Shewanella oneidensis (strain ATCC 700550 / JCM 31522 / CIP 106686 / LMG 19005 / NCIMB 14063 / MR-1).